The sequence spans 285 residues: MTPRLSFHKYQGLGNDFILVDNRWQSQPCLSPEEAVALCNRRFGVGADGVIFLLPGQEGADFSMRLFNSDGSEAEMCGNGIRCLARFLQDLGIPGRDGAYQIHTLAGRIVPQVRADGLVTVDMGIPRLLAKQIPTTLVEPDEKVIRQPLAVAGREWRVTAVSMGNPHCVVFLEEEGSLEELDLAAVGPLFEHHPAFPERTNTEFVQVLSPTRLRLRVWERGAGATLACGTGACAVLVAAVLEERAESQATVELPGGNLEIRWDPSTQHVWMTGPALHVFSGTTAG.

Residues N15 and N68 each coordinate substrate. The Proton donor role is filled by C77. Residues 78-79 (GN), N165, N201, and 219-220 (ER) each bind substrate. C228 serves as the catalytic Proton acceptor. 229–230 (GT) lines the substrate pocket.

Belongs to the diaminopimelate epimerase family. As to quaternary structure, homodimer.

Its subcellular location is the cytoplasm. It catalyses the reaction (2S,6S)-2,6-diaminopimelate = meso-2,6-diaminopimelate. The protein operates within amino-acid biosynthesis; L-lysine biosynthesis via DAP pathway; DL-2,6-diaminopimelate from LL-2,6-diaminopimelate: step 1/1. In terms of biological role, catalyzes the stereoinversion of LL-2,6-diaminopimelate (L,L-DAP) to meso-diaminopimelate (meso-DAP), a precursor of L-lysine and an essential component of the bacterial peptidoglycan. In Synechococcus sp. (strain JA-2-3B'a(2-13)) (Cyanobacteria bacterium Yellowstone B-Prime), this protein is Diaminopimelate epimerase.